A 379-amino-acid chain; its full sequence is uncharacterized protein (379 aa).

Residues 7–27 (VYIFAGIFLFIALIILIKIFF) traverse the membrane as a helical segment.

The protein localises to the membrane. This is an uncharacterized protein from Caenorhabditis elegans.